Consider the following 379-residue polypeptide: Chaperone protein DnaJ (379 aa).

The 66-residue stretch at 4 to 69 (DLYETLGVKK…QKRAAYDRYG (66 aa)) folds into the J domain. The segment at 137–215 (GKTAQIRVPT…CHGQGRVTEE (79 aa)) adopts a CR-type zinc-finger fold. Zn(2+) is bound by residues Cys-150, Cys-153, Cys-167, Cys-170, Cys-189, Cys-192, Cys-203, and Cys-206. 4 CXXCXGXG motif repeats span residues 150–157 (CDVCTGSG), 167–174 (CATCQGSG), 189–196 (CPTCGGRG), and 203–210 (CTKCHGQG).

This sequence belongs to the DnaJ family. As to quaternary structure, homodimer. Zn(2+) serves as cofactor.

It is found in the cytoplasm. Functionally, participates actively in the response to hyperosmotic and heat shock by preventing the aggregation of stress-denatured proteins and by disaggregating proteins, also in an autonomous, DnaK-independent fashion. Unfolded proteins bind initially to DnaJ; upon interaction with the DnaJ-bound protein, DnaK hydrolyzes its bound ATP, resulting in the formation of a stable complex. GrpE releases ADP from DnaK; ATP binding to DnaK triggers the release of the substrate protein, thus completing the reaction cycle. Several rounds of ATP-dependent interactions between DnaJ, DnaK and GrpE are required for fully efficient folding. Also involved, together with DnaK and GrpE, in the DNA replication of plasmids through activation of initiation proteins. The polypeptide is Chaperone protein DnaJ (Sinorhizobium fredii (strain NBRC 101917 / NGR234)).